The chain runs to 360 residues: DNA polymerase IV (360 aa).

In terms of domain architecture, UmuC spans 8–189 (IIHVDMDCFF…LPLEKIPGVG (182 aa)). 2 residues coordinate Mg(2+): Asp12 and Asp107. Glu108 is an active-site residue.

Belongs to the DNA polymerase type-Y family. Monomer. It depends on Mg(2+) as a cofactor.

It localises to the cytoplasm. It carries out the reaction DNA(n) + a 2'-deoxyribonucleoside 5'-triphosphate = DNA(n+1) + diphosphate. Its function is as follows. Poorly processive, error-prone DNA polymerase involved in untargeted mutagenesis. Copies undamaged DNA at stalled replication forks, which arise in vivo from mismatched or misaligned primer ends. These misaligned primers can be extended by PolIV. Exhibits no 3'-5' exonuclease (proofreading) activity. May be involved in translesional synthesis, in conjunction with the beta clamp from PolIII. This is DNA polymerase IV from Vibrio cholerae serotype O1 (strain ATCC 39315 / El Tor Inaba N16961).